The following is a 188-amino-acid chain: Cell division protein SepF (188 aa).

The span at 152–162 (TSHDEASTPTV) shows a compositional bias: polar residues. A disordered region spans residues 152–188 (TSHDEASTPTVVSRDAEAEQQQEAAAAPSPAWGATAL).

This sequence belongs to the SepF family. As to quaternary structure, homodimer. Interacts with FtsZ.

The protein localises to the cytoplasm. Its function is as follows. Cell division protein that is part of the divisome complex and is recruited early to the Z-ring. Probably stimulates Z-ring formation, perhaps through the cross-linking of FtsZ protofilaments. Its function overlaps with FtsA. The polypeptide is Cell division protein SepF (Parasynechococcus marenigrum (strain WH8102)).